A 1273-amino-acid polypeptide reads, in one-letter code: ABC transporter B family member 2 (1273 aa).

The N-terminal stretch at 1-30 is a signal peptide; it reads MYISLIFFLSNHFPPLISIPIFIFLSFSSP. 7 helical membrane-spanning segments follow: residues 66–86, 91–111, 126–146, 209–229, 230–250, 305–325, and 345–365; these read FSFADFYDCVLMTLGSVGACI, VPIFFIFFGKLINIIGLAYLF, FVYLSVAILFSSWLEVACWMH, FIAGFAIGFTSVWQISLVTLS, IVPLIALAGGIYAFVAIGLIA, GLGLGSMHCVLFLSWALLVWF, and LNVVIAGLSLGQAAPDISAFV. The region spanning 77–366 is the ABC transmembrane type-1 1 domain; the sequence is MTLGSVGACI…AAPDISAFVR (290 aa). The ABC transporter 1 domain occupies 401 to 637; sequence IQFKDATFSY…PDGAYSSLLR (237 aa). Residue 436–443 coordinates ATP; sequence GGSGSGKS. 2 N-linked (GlcNAc...) asparagine glycosylation sites follow: asparagine 466 and asparagine 651. In terms of domain architecture, ABC transmembrane type-1 2 spans 710-997; sequence GVCGTICAFI…TLALAPDLLK (288 aa). The next 2 membrane-spanning stretches (helical) occupy residues 711-731 and 752-772; these read VCGTICAFIAGSQMPLFALGV and IAILFCCASVITLIVYTIEHI. Asparagine 806 is a glycosylation site (N-linked (GlcNAc...) asparagine). A run of 3 helical transmembrane segments spans residues 832–852, 934–954, and 975–995; these read ILLQNLGLVVTSFIIAFILNW, IAGLFYGVSQFFIFSSYGLAL, and FMVLIVTALAMGETLALAPDL. In terms of domain architecture, ABC transporter 2 spans 1030–1266; the sequence is IELKGVHFSY…KSGPYFKLIS (237 aa). 1065–1072 provides a ligand contact to ATP; the sequence is GQSGSGKS. N-linked (GlcNAc...) asparagine glycosylation is found at asparagine 1217 and asparagine 1256.

It belongs to the ABC transporter superfamily. ABCB family. Multidrug resistance exporter (TC 3.A.1.201) subfamily. Interacts with 1-naphthylphthalamic acid (NPA).

Its subcellular location is the membrane. The polypeptide is ABC transporter B family member 2 (ABCB2) (Arabidopsis thaliana (Mouse-ear cress)).